A 644-amino-acid chain; its full sequence is MDDIADRMRMDAGEVTLVNHNSVFKTHLLPQTGFPEDQLSLSDQQILSSRQGHLDRSFTCSTRSAAYNPSYYSDNPSSDSFLGSGDLRTFGQSANGQWRNSTPSSSSSLQKSRNSRSLYLETRKTSSGLSNSFAGKSNHHCHVSAYEKSFPIKPVPSPSWSGSCRRSLLSPKKTQRRHVSTAEETVQEEEREIYRQLLQMVTGKQFTIAKPTTHFPLHLSRCLSSSKNTLKDSLFKNGNSCASQIIGSDTSSSGSASILTNQEQLSHSVYSLSSYTPDVAFGSKDSGTLHHPHHHHSVPHQPDNLAASNTQSEGSDSVILLKVKDSQTPTPSSTFFQAELWIKELTSVYDSRARERLRQIEEQKALALQLQNQRLQEREHSVHDSVELHLRVPLEKEIPVTVVQETQKKGHKLTDSEDEFPEITEEMEKEIKNVFRNGNQDEVLSEAFRLTITRKDIQTLNHLNWLNDEIINFYMNMLMERSKEKGLPSVHAFNTFFFTKLKTAGYQAVKRWTKKVDVFSVDILLVPIHLGVHWCLAVVDFRKKNITYYDSMGGINNEACRILLQYLKQESIDKKRKEFDTNGWQLFSKKSQEIPQQMNGSDCGMFACKYADCITKDRPINFTQQHMPYFRKRMVWEILHRKLL.

Positions 1-200 (MDDIADRMRM…REIYRQLLQM (200 aa)) are interaction with CCAR2. 4 positions are modified to phosphoserine: Ser57, Ser117, Ser132, and Ser157. The interval 92–117 (QSANGQWRNSTPSSSSSLQKSRNSRS) is disordered. Over residues 99 to 117 (RNSTPSSSSSLQKSRNSRS) the composition is skewed to low complexity. Disordered regions lie at residues 156–184 (PSPS…TAEE) and 283–312 (SKDS…NTQS). The short motif at 171 to 177 (PKKTQRR) is the Nuclear localization signal element. Residues 450 to 613 (LTITRKDIQT…GMFACKYADC (164 aa)) form a protease region. Residues His533 and Asp550 contribute to the active site. The Nuclear localization signal motif lies at 574 to 577 (KKRK). Catalysis depends on Cys603, which acts as the Nucleophile. Positions 628–634 (PYFRKRM) match the Nuclear localization signal motif. The Nuclear export signal motif lies at 635-644 (VWEILHRKLL).

The protein belongs to the peptidase C48 family. In terms of assembly, interacts with RBM33; promoting ALKBH5 desumoylation and subsequent activation. As to expression, highly expressed in testis. Expressed at lower levels in thymus, pancreas, spleen, liver, ovary and small intestine.

The protein resides in the nucleus. It localises to the cytoplasm. Protease that catalyzes two essential functions in the SUMO pathway. The first is the hydrolysis of an alpha-linked peptide bond at the C-terminal end of the small ubiquitin-like modifier (SUMO) propeptides, SUMO1, SUMO2 and SUMO3 leading to the mature form of the proteins. The second is the deconjugation of SUMO1, SUMO2 and SUMO3 from targeted proteins, by cleaving an epsilon-linked peptide bond between the C-terminal glycine of the mature SUMO and the lysine epsilon-amino group of the target protein. Deconjugates SUMO1 from HIPK2. Deconjugates SUMO1 from HDAC1 and BHLHE40/DEC1, which decreases its transcriptional repression activity. Deconjugates SUMO1 from CLOCK, which decreases its transcriptional activation activity. Deconjugates SUMO2 from MTA1. Inhibits N(6)-methyladenosine (m6A) RNA methylation by mediating SUMO1 deconjugation from METTL3 and ALKBH5: METTL3 inhibits the m6A RNA methyltransferase activity, while ALKBH5 desumoylation promotes m6A demethylation. Desumoylates CCAR2 which decreases its interaction with SIRT1. Deconjugates SUMO1 from GPS2. This Homo sapiens (Human) protein is Sentrin-specific protease 1 (SENP1).